Reading from the N-terminus, the 425-residue chain is Potassium/proton antiporter CemA (425 aa).

Residues 89-109 (LFLTTVKCLFILLFVPLGINF) traverse the membrane as a helical segment. Residues 159–278 (LSENQIFFGL…KTDFASVFRT (120 aa)) form an insert region. Residues 173-192 (STFPSSEKSQKSEHFSNQDE) form a disordered region. Positions 180–192 (KSQKSEHFSNQDE) are enriched in basic and acidic residues. Transmembrane regions (helical) follow at residues 300–320 (IEAI…CYLL), 350–370 (ILFI…ELFF), and 386–406 (IFLL…YLIF).

It belongs to the CemA family.

Its subcellular location is the plastid. It localises to the chloroplast inner membrane. It carries out the reaction K(+)(in) + H(+)(out) = K(+)(out) + H(+)(in). Functionally, contributes to K(+)/H(+) antiport activity by supporting proton efflux to control proton extrusion and homeostasis in chloroplasts in a light-dependent manner to modulate photosynthesis. Prevents excessive induction of non-photochemical quenching (NPQ) under continuous-light conditions. Indirectly promotes efficient inorganic carbon uptake into chloroplasts. The protein is Potassium/proton antiporter CemA of Tetradesmus obliquus (Green alga).